The primary structure comprises 93 residues: Small ribosomal subunit protein uS15c (93 aa).

It belongs to the universal ribosomal protein uS15 family. As to quaternary structure, part of the 30S ribosomal subunit.

The protein resides in the plastid. It is found in the chloroplast. The protein is Small ribosomal subunit protein uS15c (rps15) of Jasminum nudiflorum (Winter jasmine).